A 487-amino-acid chain; its full sequence is Selenium-binding protein 2 (487 aa).

Residue Ala2 is modified to N-acetylalanine. Residues Cys19 and Cys20 each coordinate selenite.

The protein belongs to the selenium-binding protein family. As to expression, mostly expressed in seedlings, leaves and stems, and, to a lower extent, in flowers and roots.

Its function is as follows. Required for the fusion of female gametophyte polar nuclei. This Arabidopsis thaliana (Mouse-ear cress) protein is Selenium-binding protein 2 (SBP2).